Consider the following 1232-residue polypeptide: Pyruvate:ferredoxin oxidoreductase (1232 aa).

Thr31 contributes to the pyruvate binding site. Glu64 is a thiamine diphosphate binding site. Arg114 contributes to the pyruvate binding site. CoA is bound by residues 427–431, Lys459, Asn560, and Asn602; that span reads ADGTV. 4Fe-4S ferredoxin-type domains are found at residues 680-709 and 736-767; these read NVPQ…PVLA and FRIQ…MQPL. 10 residues coordinate [4Fe-4S] cluster: Cys689, Cys692, Cys695, Cys699, Cys745, Cys748, Cys751, Cys755, Cys812, and Cys815. Thiamine diphosphate is bound by residues Glu817, Cys840, and 962–965; that span reads GDGW. Cys840 lines the [4Fe-4S] cluster pocket. Residue Asp963 participates in Mg(2+) binding. The Ca(2+) site is built by Asp983 and Asn985. Mg(2+) is bound by residues Thr991 and Val993. Thiamine diphosphate is bound at residue 991–996; it reads TEVYSN. 4 residues coordinate Ca(2+): Ala1056, Phe1059, Gly1061, and Ser1063. Cys1071 contributes to the [4Fe-4S] cluster binding site. A disulfide bond links Cys1195 and Cys1212. Positions 1197-1232 are disordered; that stretch reads RDDTPMMARPDSGEACDQNRAGTSEQQGDLSKRTKK. The span at 1216-1225 shows a compositional bias: polar residues; sequence RAGTSEQQGD.

It belongs to the pyruvate:ferredoxin/flavodoxin oxidoreductase family. Homodimer. The cofactor is [4Fe-4S] cluster. Thiamine diphosphate is required as a cofactor. Mg(2+) serves as cofactor.

It localises to the cytoplasm. It catalyses the reaction 2 oxidized [2Fe-2S]-[ferredoxin] + pyruvate + CoA = 2 reduced [2Fe-2S]-[ferredoxin] + acetyl-CoA + CO2 + H(+). Functionally, catalyzes the ferredoxin-dependent oxidative decarboxylation of pyruvate. Required for the transfer of electrons from pyruvate to ferredoxin. Ferredoxin I and ferredoxin II, which are single 4Fe-4S cluster ferredoxins are the most effective electron carriers of POR. The polypeptide is Pyruvate:ferredoxin oxidoreductase (Desulfocurvibacter africanus (Desulfovibrio africanus)).